The following is a 175-amino-acid chain: DDB1- and CUL4-associated factor 16 (175 aa).

The tract at residues 1-42 (MGPRNPSPDPLSESESEEEENTNYLNESSGEEWDSSEEEDPV) is disordered. Acidic residues-rich tracts occupy residues 12–21 (SESESEEEEN) and 29–41 (SGEEWDSSEEEDP). At Lys61 the chain carries N6-acetyllysine.

Interacts with DDB1 and CUL4A.

It is found in the nucleus. It participates in protein modification; protein ubiquitination. Functionally, functions as a substrate recognition component for CUL4-DDB1 E3 ubiquitin-protein ligase complex, which mediates ubiquitination and proteasome-dependent degradation of nuclear proteins. The chain is DDB1- and CUL4-associated factor 16 (DCAF16) from Bos taurus (Bovine).